We begin with the raw amino-acid sequence, 865 residues long: Alanine--tRNA ligase (865 aa).

4 residues coordinate Zn(2+): H556, H560, C660, and H664.

The protein belongs to the class-II aminoacyl-tRNA synthetase family. Zn(2+) is required as a cofactor.

The protein resides in the cytoplasm. The enzyme catalyses tRNA(Ala) + L-alanine + ATP = L-alanyl-tRNA(Ala) + AMP + diphosphate. Functionally, catalyzes the attachment of alanine to tRNA(Ala) in a two-step reaction: alanine is first activated by ATP to form Ala-AMP and then transferred to the acceptor end of tRNA(Ala). Also edits incorrectly charged Ser-tRNA(Ala) and Gly-tRNA(Ala) via its editing domain. The chain is Alanine--tRNA ligase from Vesicomyosocius okutanii subsp. Calyptogena okutanii (strain HA).